A 304-amino-acid polypeptide reads, in one-letter code: Mas-related G-protein coupled receptor member A (304 aa).

Over 1 to 17 (MDKTIPGSFNSRTLIPN) the chain is Extracellular. The chain crosses the membrane as a helical span at residues 18–38 (LLIIISGLVGLIGNAMVFWLL). The Cytoplasmic segment spans residues 39–46 (GFRLARNA). Residues 47–67 (FSVYILNLALADFLFLLCHII) form a helical membrane-spanning segment. The Extracellular portion of the chain corresponds to 68–80 (DSTLLLLKFSYPN). The helical transmembrane segment at 81–101 (IIFLPCFNTVMMVPYIAGLSM) threads the bilayer. Over 102–132 (LSAISTERCLSVVCPIWYRCRRPKHTSTVMC) the chain is Cytoplasmic. A helical membrane pass occupies residues 133–153 (SAIWVLSLLICILNRYFCGFL). Topologically, residues 154–167 (DTKYEKDNRCLASN) are extracellular. A helical membrane pass occupies residues 168-188 (FFTAACLIFLFVVLCLSSLAL). Residues 189 to 211 (LVRLFCGAGRMKLTRLYATIMLT) lie on the Cytoplasmic side of the membrane. Residues 212 to 232 (VLVFLLCGLPFGIHWFLLIWI) traverse the membrane as a helical segment. The Extracellular portion of the chain corresponds to 233-244 (KIDYGKFAYGLY). Residues 245–265 (LAALVLTAVNSCANPIIYFFV) form a helical membrane-spanning segment. At 266-304 (GSFRHQKHQTLKMVLQRALQDTPETAENTVEMSSSKVEP) the chain is on the cytoplasmic side.

The protein belongs to the G-protein coupled receptor 1 family. Mas subfamily. Expressed in a subset of IB4-positive small diameter nociceptive dorsal root neurons.

It is found in the cell membrane. In terms of biological role, orphan receptor activated by a subset of RFamide-family neuropeptides such as FLRF-amide and FMRF-amide. Mediates its action by association with G proteins that activate a phosphatidylinositol-calcium second messenger system. Its effect is mediated by G(q) and G(11) proteins. May regulate the function of nociceptive neurons by modulation of pain perception. In Rattus norvegicus (Rat), this protein is Mas-related G-protein coupled receptor member A (Mrgpra).